The sequence spans 404 residues: BRCA1-A complex subunit Abraxas 1 (404 aa).

Residues 7–161 (YIRVSGFVLG…YAVYRSHGSQ (155 aa)) enclose the MPN domain. Residues 219-268 (MNNSLQGELKMACKKVEESERLVEKLLADVSDLRRMVNERKQELREISAD) are a coiled coil. Residues 339–404 (GRLGRGGGTS…NLDVSNSPVF (66 aa)) are disordered. Residues 391-404 (RNGNNLDVSNSPVF) show a composition bias toward polar residues. Position 401 is a phosphoserine (Ser401). The pSXXF motif motif lies at 401–404 (SPVF).

The protein belongs to the FAM175 family. Abraxas subfamily. Component of the BRCA1-A complex. Component of the BRISC complex. Homodimer. Interacts directly (when phosphorylated at Ser-401) with brca1. The phosphorylated homodimer can interact directly with two brca1 chains, giving rise to a heterotetramer. Phosphorylation of Ser-401 of the pSXXF motif by ATM or ATR constitutes a specific recognition motif for the BRCT domain of BRCA1.

The protein resides in the nucleus. Functionally, involved in DNA damage response and double-strand break (DSB) repair. Component of the BRCA1-A complex, acting as a central scaffold protein that assembles the various components of the complex and mediates the recruitment of brca1. The BRCA1-A complex specifically recognizes 'Lys-63'-linked ubiquitinated histones H2A and H2AX at DNA lesion sites, leading to target the brca1-bard1 heterodimer to sites of DNA damage at DSBs. This complex also possesses deubiquitinase activity that specifically removes 'Lys-63'-linked ubiquitin on histones H2A and H2AX. The protein is BRCA1-A complex subunit Abraxas 1 of Salmo salar (Atlantic salmon).